The primary structure comprises 191 residues: Large ribosomal subunit protein uL6B (191 aa).

Belongs to the universal ribosomal protein uL6 family. In terms of assembly, component of the large ribosomal subunit (LSU). Mature yeast ribosomes consist of a small (40S) and a large (60S) subunit. The 40S small subunit contains 1 molecule of ribosomal RNA (18S rRNA) and 33 different proteins (encoded by 57 genes). The large 60S subunit contains 3 rRNA molecules (25S, 5.8S and 5S rRNA) and 46 different proteins (encoded by 81 genes).

It is found in the cytoplasm. Functionally, component of the ribosome, a large ribonucleoprotein complex responsible for the synthesis of proteins in the cell. The small ribosomal subunit (SSU) binds messenger RNAs (mRNAs) and translates the encoded message by selecting cognate aminoacyl-transfer RNA (tRNA) molecules. The large subunit (LSU) contains the ribosomal catalytic site termed the peptidyl transferase center (PTC), which catalyzes the formation of peptide bonds, thereby polymerizing the amino acids delivered by tRNAs into a polypeptide chain. The nascent polypeptides leave the ribosome through a tunnel in the LSU and interact with protein factors that function in enzymatic processing, targeting, and the membrane insertion of nascent chains at the exit of the ribosomal tunnel. The polypeptide is Large ribosomal subunit protein uL6B (Saccharomyces cerevisiae (strain ATCC 204508 / S288c) (Baker's yeast)).